The following is a 61-amino-acid chain: Small ribosomal subunit protein uS14 (61 aa).

Zn(2+)-binding residues include C24, C27, C40, and C43.

The protein belongs to the universal ribosomal protein uS14 family. Zinc-binding uS14 subfamily. Part of the 30S ribosomal subunit. Contacts proteins S3 and S10. The cofactor is Zn(2+).

Binds 16S rRNA, required for the assembly of 30S particles and may also be responsible for determining the conformation of the 16S rRNA at the A site. The chain is Small ribosomal subunit protein uS14 from Roseiflexus castenholzii (strain DSM 13941 / HLO8).